The primary structure comprises 261 residues: Potassium/proton antiporter CemA (261 aa).

2 consecutive transmembrane segments (helical) span residues 47 to 67 (FLVF…GPWV) and 138 to 158 (IISH…YFIM).

This sequence belongs to the CemA family.

The protein localises to the plastid. It localises to the chloroplast inner membrane. The catalysed reaction is K(+)(in) + H(+)(out) = K(+)(out) + H(+)(in). Functionally, contributes to K(+)/H(+) antiport activity by supporting proton efflux to control proton extrusion and homeostasis in chloroplasts in a light-dependent manner to modulate photosynthesis. Prevents excessive induction of non-photochemical quenching (NPQ) under continuous-light conditions. Indirectly promotes efficient inorganic carbon uptake into chloroplasts. The protein is Potassium/proton antiporter CemA of Ginkgo biloba (Ginkgo).